The following is a 283-amino-acid chain: MATRLDGRAVSKKILADLKQTIAQLAQHDVTPTLAVVLVGSNPASEVYVRNKQRRAEDIGVRSLMFRMPEATTQADLLAKVAELNHDPDIDAILVQLPLPAGLDEQAVIDAIDPDKDVDGFSPVSVGRLWANEPTVVASTPYGIMALLDAYDIDVAGKRVVIIGRSNIVGRPLAGLMVNHDATVTIAHSKTRDLKQLAKEADILVVAVGVPHFIGADAVKPGAVVIDVGISRGADGKVLGDVDEAAVAPIASAITPVPGGVGPMTIASLMAQTVTLAKRRANG.

Residues 164 to 166 (GRS), Ser-189, and Ile-230 each bind NADP(+).

The protein belongs to the tetrahydrofolate dehydrogenase/cyclohydrolase family. In terms of assembly, homodimer.

It catalyses the reaction (6R)-5,10-methylene-5,6,7,8-tetrahydrofolate + NADP(+) = (6R)-5,10-methenyltetrahydrofolate + NADPH. The enzyme catalyses (6R)-5,10-methenyltetrahydrofolate + H2O = (6R)-10-formyltetrahydrofolate + H(+). Its pathway is one-carbon metabolism; tetrahydrofolate interconversion. Its function is as follows. Catalyzes the oxidation of 5,10-methylenetetrahydrofolate to 5,10-methenyltetrahydrofolate and then the hydrolysis of 5,10-methenyltetrahydrofolate to 10-formyltetrahydrofolate. The polypeptide is Bifunctional protein FolD (Lacticaseibacillus paracasei (strain ATCC 334 / BCRC 17002 / CCUG 31169 / CIP 107868 / KCTC 3260 / NRRL B-441) (Lactobacillus paracasei)).